The primary structure comprises 360 residues: GTPase Obg (360 aa).

The Obg domain occupies 1–156 (MFVDSVEIII…KCVRLELKLI (156 aa)). The OBG-type G domain maps to 157–360 (ADIGLVGFPN…LKFVLLEALP (204 aa)). Residues 163–170 (GFPNAGKS), 188–192 (FTTLV), 210–213 (DIPG), 279–282 (NKCD), and 341–343 (SAV) contribute to the GTP site. 2 residues coordinate Mg(2+): Ser-170 and Thr-190.

This sequence belongs to the TRAFAC class OBG-HflX-like GTPase superfamily. OBG GTPase family. Monomer. Mg(2+) serves as cofactor.

The protein resides in the cytoplasm. Its function is as follows. An essential GTPase which binds GTP, GDP and possibly (p)ppGpp with moderate affinity, with high nucleotide exchange rates and a fairly low GTP hydrolysis rate. Plays a role in control of the cell cycle, stress response, ribosome biogenesis and in those bacteria that undergo differentiation, in morphogenesis control. This is GTPase Obg from Helicobacter pylori (strain ATCC 700392 / 26695) (Campylobacter pylori).